Here is a 159-residue protein sequence, read N- to C-terminus: Biogenesis of lysosome-related organelles complex 1 subunit 2 (159 aa).

The interval 1 to 37 is disordered; sequence MDKPTTSAAAAAAQDSNLLPDSPQHGPTLSSASSFEA. Residues 14–36 are compositionally biased toward polar residues; that stretch reads QDSNLLPDSPQHGPTLSSASSFE. Residues 69–134 adopt a coiled-coil conformation; that stretch reads EDYKLLEEMN…KLEAAAYKLD (66 aa).

The protein belongs to the BLOC1S2 family. As to quaternary structure, homodimer. Component of the biogenesis of lysosome-related organelles complex-1 (BLOC-1) composed of Blos1, Blos2, Blos3, Blos4, Dysb, Muted, Pldn and Snapin. Interacts with Snapin.

In terms of biological role, component of the biogenesis of lysosome-related organelles complex-1 (BLOC-1) involved in pigment granule biogenesis. The polypeptide is Biogenesis of lysosome-related organelles complex 1 subunit 2 (Drosophila melanogaster (Fruit fly)).